Reading from the N-terminus, the 97-residue chain is Defensin-like protein 196 (97 aa).

Residues methionine 1–alanine 28 form the signal peptide. Disulfide bonds link cysteine 33/cysteine 85, cysteine 46/cysteine 70, cysteine 55/cysteine 80, and cysteine 59/cysteine 82.

It belongs to the DEFL family. Protease inhibitor I18 (RTI/MTI-2) subfamily.

The protein resides in the secreted. The chain is Defensin-like protein 196 (ATTI4) from Arabidopsis thaliana (Mouse-ear cress).